We begin with the raw amino-acid sequence, 329 residues long: Probable quinone oxidoreductase (329 aa).

Residue serine 191 is modified to Phosphoserine.

Belongs to the zinc-containing alcohol dehydrogenase family. Quinone oxidoreductase subfamily.

The protein resides in the cytoplasm. The protein localises to the nucleus. The catalysed reaction is 2 a quinone + NADPH + H(+) = 2 a 1,4-benzosemiquinone + NADP(+). This Schizosaccharomyces pombe (strain 972 / ATCC 24843) (Fission yeast) protein is Probable quinone oxidoreductase (zta1).